Here is a 128-residue protein sequence, read N- to C-terminus: Small ribosomal subunit protein uS13 (128 aa).

Positions 98-128 (VRGQRTRTNARTRKGPRPRIGVKKKGKQAGS) are disordered. Positions 101–128 (QRTRTNARTRKGPRPRIGVKKKGKQAGS) are enriched in basic residues.

It belongs to the universal ribosomal protein uS13 family. Part of the 30S ribosomal subunit. Forms a loose heterodimer with protein S19. Forms two bridges to the 50S subunit in the 70S ribosome.

Located at the top of the head of the 30S subunit, it contacts several helices of the 16S rRNA. In the 70S ribosome it contacts the 23S rRNA (bridge B1a) and protein L5 of the 50S subunit (bridge B1b), connecting the 2 subunits; these bridges are implicated in subunit movement. Contacts the tRNAs in the A and P-sites. The chain is Small ribosomal subunit protein uS13 from Thermomicrobium roseum (strain ATCC 27502 / DSM 5159 / P-2).